The chain runs to 631 residues: 1-deoxy-D-xylulose-5-phosphate synthase (631 aa).

Residues His-73 and 114–116 each bind thiamine diphosphate; that span reads GHS. Residue Asp-145 coordinates Mg(2+). Thiamine diphosphate contacts are provided by residues 146 to 147, Asn-174, Tyr-285, and Glu-366; that span reads GA. Asn-174 provides a ligand contact to Mg(2+).

The protein belongs to the transketolase family. DXPS subfamily. Homodimer. It depends on Mg(2+) as a cofactor. The cofactor is thiamine diphosphate.

The enzyme catalyses D-glyceraldehyde 3-phosphate + pyruvate + H(+) = 1-deoxy-D-xylulose 5-phosphate + CO2. It participates in metabolic intermediate biosynthesis; 1-deoxy-D-xylulose 5-phosphate biosynthesis; 1-deoxy-D-xylulose 5-phosphate from D-glyceraldehyde 3-phosphate and pyruvate: step 1/1. Its function is as follows. Catalyzes the acyloin condensation reaction between C atoms 2 and 3 of pyruvate and glyceraldehyde 3-phosphate to yield 1-deoxy-D-xylulose-5-phosphate (DXP). The protein is 1-deoxy-D-xylulose-5-phosphate synthase of Desulfitobacterium hafniense (strain DSM 10664 / DCB-2).